The sequence spans 55 residues: UPF0391 membrane protein NE1120 (55 aa).

A run of 2 helical transmembrane segments spans residues 4 to 24 (MALV…AGIA) and 27 to 47 (LAWA…VFYL).

It belongs to the UPF0391 family.

The protein resides in the cell membrane. This chain is UPF0391 membrane protein NE1120, found in Nitrosomonas europaea (strain ATCC 19718 / CIP 103999 / KCTC 2705 / NBRC 14298).